A 261-amino-acid polypeptide reads, in one-letter code: 8-demethyl-8-(2,3-dimethoxy-alpha-L-rhamnosyl)-tetracenomycin-C 4'-O-methyltransferase (261 aa).

Residues 53-54 (TM), 81-85 (ETGVW), 111-115 (DSFEG), Phe167, 185-186 (DG), and Ser191 each bind S-adenosyl-L-methionine. Asp185 contacts Mg(2+). Positions 212 and 213 each coordinate Mg(2+).

This sequence belongs to the methyltransferase TylF/MycF family. The cofactor is Mg(2+).

It catalyses the reaction 8-demethyl-8-(2,3-di-O-methyl-alpha-L-rhamnosyl)-tetracenomycin C + S-adenosyl-L-methionine = 8-demethyl-8-(2,3,4-tri-O-methyl-alpha-L-rhamnosyl)-tetracenomycin C + S-adenosyl-L-homocysteine + H(+). It functions in the pathway antibiotic biosynthesis. Functionally, O-methyltransferase involved in the biosynthesis of the permethylated L-rhamnose moiety of elloramycin, an antitumor polyketide. Mediates the methylation of the hydroxy groups at the 4'-position after the sugar moiety has been attached to the aglycon. The protein is 8-demethyl-8-(2,3-dimethoxy-alpha-L-rhamnosyl)-tetracenomycin-C 4'-O-methyltransferase of Streptomyces olivaceus.